Reading from the N-terminus, the 271-residue chain is 5-deoxy-glucuronate isomerase (271 aa).

This sequence belongs to the isomerase IolB family.

The enzyme catalyses 5-deoxy-D-glucuronate = 5-dehydro-2-deoxy-D-gluconate. It functions in the pathway polyol metabolism; myo-inositol degradation into acetyl-CoA; acetyl-CoA from myo-inositol: step 4/7. In terms of biological role, involved in the isomerization of 5-deoxy-glucuronate (5DG) to 5-dehydro-2-deoxy-D-gluconate (DKG or 2-deoxy-5-keto-D-gluconate). The sequence is that of 5-deoxy-glucuronate isomerase from Bacillus licheniformis (strain ATCC 14580 / DSM 13 / JCM 2505 / CCUG 7422 / NBRC 12200 / NCIMB 9375 / NCTC 10341 / NRRL NRS-1264 / Gibson 46).